Reading from the N-terminus, the 298-residue chain is Bifunctional protein FolD (298 aa).

Residues 165–167 (GRS), Ser-190, and Ile-231 contribute to the NADP(+) site.

It belongs to the tetrahydrofolate dehydrogenase/cyclohydrolase family. Homodimer.

It catalyses the reaction (6R)-5,10-methylene-5,6,7,8-tetrahydrofolate + NADP(+) = (6R)-5,10-methenyltetrahydrofolate + NADPH. The catalysed reaction is (6R)-5,10-methenyltetrahydrofolate + H2O = (6R)-10-formyltetrahydrofolate + H(+). It participates in one-carbon metabolism; tetrahydrofolate interconversion. Functionally, catalyzes the oxidation of 5,10-methylenetetrahydrofolate to 5,10-methenyltetrahydrofolate and then the hydrolysis of 5,10-methenyltetrahydrofolate to 10-formyltetrahydrofolate. This is Bifunctional protein FolD from Prochlorococcus marinus (strain MIT 9301).